The primary structure comprises 119 residues: Defensin-like protein 260 (119 aa).

Positions 1–24 (MKIASLKLLLLVSLLFAVTQNGIS) are cleaved as a signal peptide. Intrachain disulfides connect cysteine 44–cysteine 99, cysteine 63–cysteine 79, cysteine 69–cysteine 83, and cysteine 73–cysteine 85.

This sequence belongs to the DEFL family.

The protein resides in the secreted. This chain is Defensin-like protein 260, found in Arabidopsis thaliana (Mouse-ear cress).